Consider the following 406-residue polypeptide: Coenzyme A biosynthesis bifunctional protein CoaBC (406 aa).

A phosphopantothenoylcysteine decarboxylase region spans residues 2–190 (SLAGKKIVLG…SPVNDLKHLN (189 aa)). Cysteine 158 acts as the Proton donor in catalysis. Residues 191–406 (IMITAGPTRE…VTRYDEKNRR (216 aa)) are phosphopantothenate--cysteine ligase. Residues 273–275 (GCA), aspartate 279, lysine 289, 308–311 (PDIV), phenylalanine 327, lysine 341, and lysine 345 contribute to the CTP site.

This sequence in the N-terminal section; belongs to the HFCD (homo-oligomeric flavin containing Cys decarboxylase) superfamily. It in the C-terminal section; belongs to the PPC synthetase family. Mg(2+) serves as cofactor. Requires FMN as cofactor.

The enzyme catalyses N-[(R)-4-phosphopantothenoyl]-L-cysteine + H(+) = (R)-4'-phosphopantetheine + CO2. The catalysed reaction is (R)-4'-phosphopantothenate + L-cysteine + CTP = N-[(R)-4-phosphopantothenoyl]-L-cysteine + CMP + diphosphate + H(+). Its pathway is cofactor biosynthesis; coenzyme A biosynthesis; CoA from (R)-pantothenate: step 2/5. It functions in the pathway cofactor biosynthesis; coenzyme A biosynthesis; CoA from (R)-pantothenate: step 3/5. Its function is as follows. Catalyzes two sequential steps in the biosynthesis of coenzyme A. In the first step cysteine is conjugated to 4'-phosphopantothenate to form 4-phosphopantothenoylcysteine. In the second step the latter compound is decarboxylated to form 4'-phosphopantotheine. The protein is Coenzyme A biosynthesis bifunctional protein CoaBC of Escherichia coli O6:H1 (strain CFT073 / ATCC 700928 / UPEC).